The chain runs to 196 residues: MIIKSSNYAVSAVREDQYPKDNLPEIALSGRSNVGKSSLINTLLNRKNLARTSSQPGKTQTLNFYLINDEFYLVDVPGYGYARVSQKKRQEFGEMIQDYLETRPNLKGLVILIDSRHEPTKDDIAMYNYAQYLNLPILVVCTKIDKIKKSQVNKVMSRLKKNIDLNYDYVTVLTFSSVTKLHVAELGNWIEEKISK.

The 175-residue stretch at 22 to 196 folds into the EngB-type G domain; sequence NLPEIALSGR…GNWIEEKISK (175 aa). Residues 30 to 37, 57 to 61, 75 to 78, 142 to 145, and 175 to 177 contribute to the GTP site; these read GRSNVGKS, GKTQT, DVPG, TKID, and FSS. Mg(2+) contacts are provided by Ser-37 and Thr-59.

Belongs to the TRAFAC class TrmE-Era-EngA-EngB-Septin-like GTPase superfamily. EngB GTPase family. Mg(2+) is required as a cofactor.

Necessary for normal cell division and for the maintenance of normal septation. This is Probable GTP-binding protein EngB from Lactobacillus helveticus (strain DPC 4571).